A 230-amino-acid polypeptide reads, in one-letter code: Ureidoacrylate amidohydrolase RutB (230 aa).

Catalysis depends on aspartate 24, which acts as the Proton acceptor. Lysine 133 is a catalytic residue. Cysteine 166 serves as the catalytic Nucleophile.

The protein belongs to the isochorismatase family. RutB subfamily.

It catalyses the reaction (Z)-3-ureidoacrylate + H2O + H(+) = (Z)-3-aminoacrylate + NH4(+) + CO2. The enzyme catalyses (Z)-3-ureidoacrylate + H2O = (Z)-3-aminoacrylate + carbamate + H(+). The catalysed reaction is (Z)-2-methylureidoacrylate + H2O + H(+) = (Z)-2-methylaminoacrylate + NH4(+) + CO2. In terms of biological role, hydrolyzes ureidoacrylate to form aminoacrylate and carbamate. The carbamate hydrolyzes spontaneously, thereby releasing one of the nitrogen atoms of the pyrimidine ring as ammonia and one of its carbon atoms as CO2. The protein is Ureidoacrylate amidohydrolase RutB of Escherichia coli O150:H5 (strain SE15).